A 546-amino-acid chain; its full sequence is CTP synthase (546 aa).

Positions 1 to 267 (MSKFVFVTGG…AQQTLELLNL (267 aa)) are amidoligase domain. S13 provides a ligand contact to CTP. S13 provides a ligand contact to UTP. ATP-binding positions include 14-19 (SIGKGI) and D71. 2 residues coordinate Mg(2+): D71 and E141. Residues 148-150 (DIE), 188-193 (KTKPTQ), and K224 contribute to the CTP site. Residues 188–193 (KTKPTQ) and K224 each bind UTP. Positions 292–534 (EIAIVGKYVQ…MKAALKGREE (243 aa)) constitute a Glutamine amidotransferase type-1 domain. G354 lines the L-glutamine pocket. The active-site Nucleophile; for glutamine hydrolysis is the C381. L-glutamine-binding positions include 382 to 385 (LGMQ), E405, and R462. Catalysis depends on residues H507 and E509.

Belongs to the CTP synthase family. In terms of assembly, homotetramer.

The enzyme catalyses UTP + L-glutamine + ATP + H2O = CTP + L-glutamate + ADP + phosphate + 2 H(+). It catalyses the reaction L-glutamine + H2O = L-glutamate + NH4(+). It carries out the reaction UTP + NH4(+) + ATP = CTP + ADP + phosphate + 2 H(+). It functions in the pathway pyrimidine metabolism; CTP biosynthesis via de novo pathway; CTP from UDP: step 2/2. With respect to regulation, allosterically activated by GTP, when glutamine is the substrate; GTP has no effect on the reaction when ammonia is the substrate. The allosteric effector GTP functions by stabilizing the protein conformation that binds the tetrahedral intermediate(s) formed during glutamine hydrolysis. Inhibited by the product CTP, via allosteric rather than competitive inhibition. Catalyzes the ATP-dependent amination of UTP to CTP with either L-glutamine or ammonia as the source of nitrogen. Regulates intracellular CTP levels through interactions with the four ribonucleotide triphosphates. This is CTP synthase from Microcystis aeruginosa (strain NIES-843 / IAM M-2473).